The primary structure comprises 243 residues: MLLSLHQLSVKFGKHLILDRINISIGRGEIVTIVGPNGSGKSTLLKTLIGAIKPVSGCIERAEKLKVGYVPQRLHIDEALPMTVFRFLTLPVQRSKKTISQALVRAGIPGVEKQQLNSLSGGQLQRVLLARALLEEPMLLLLDEATQGLDQRGTVDFYQHIDSFRKETGCAIIMVSHDLHVVMKNTDRVICLNGQICCEGTPEKVSNSPEYKVLFGLDDNDVLGVYRHKAASNQFNGSVLNVG.

Residues 3-218 (LSLHQLSVKF…PEYKVLFGLD (216 aa)) enclose the ABC transporter domain. An ATP-binding site is contributed by 35–42 (GPNGSGKS).

It belongs to the ABC transporter superfamily. Zinc importer (TC 3.A.1.15.5) family. The complex is composed of two ATP-binding proteins (ZnuC), two transmembrane proteins (ZnuB) and a solute-binding protein (ZnuA).

It is found in the cell inner membrane. The catalysed reaction is Zn(2+)(out) + ATP(in) + H2O(in) = Zn(2+)(in) + ADP(in) + phosphate(in) + H(+)(in). Part of the ABC transporter complex ZnuABC involved in zinc import. Responsible for energy coupling to the transport system. The polypeptide is Zinc import ATP-binding protein ZnuC 2 (Aliivibrio fischeri (strain ATCC 700601 / ES114) (Vibrio fischeri)).